A 255-amino-acid chain; its full sequence is Geranylgeranylglyceryl phosphate synthase (255 aa).

Mg(2+)-binding residues include Asp34 and Thr64. Sn-glycerol 1-phosphate contacts are provided by residues 182 to 188 (YLEAGSG), 213 to 214 (GG), and 235 to 236 (GN).

Belongs to the GGGP/HepGP synthase family. Group II subfamily. Mg(2+) serves as cofactor.

It localises to the cytoplasm. The catalysed reaction is sn-glycerol 1-phosphate + (2E,6E,10E)-geranylgeranyl diphosphate = sn-3-O-(geranylgeranyl)glycerol 1-phosphate + diphosphate. It participates in membrane lipid metabolism; glycerophospholipid metabolism. Its function is as follows. Prenyltransferase that catalyzes the transfer of the geranylgeranyl moiety of geranylgeranyl diphosphate (GGPP) to the C3 hydroxyl of sn-glycerol-1-phosphate (G1P). This reaction is the first ether-bond-formation step in the biosynthesis of archaeal membrane lipids. The sequence is that of Geranylgeranylglyceryl phosphate synthase from Saccharolobus solfataricus (strain ATCC 35092 / DSM 1617 / JCM 11322 / P2) (Sulfolobus solfataricus).